A 351-amino-acid polypeptide reads, in one-letter code: Cytochrome c biogenesis protein CcsA (351 aa).

A run of 8 helical transmembrane segments spans residues 17–37 (VLFL…LPAI), 38–58 (NALG…LLGA), 68–88 (LSNL…VHLI), 97–117 (LVGV…TLTL), 143–163 (MMLS…FLVI), 259–279 (IIGL…VWAN), 286–306 (WSWD…AAYL), and 320–340 (AILA…VNLL).

It belongs to the CcmF/CycK/Ccl1/NrfE/CcsA family. In terms of assembly, may interact with ccs1.

The protein resides in the cellular thylakoid membrane. In terms of biological role, required during biogenesis of c-type cytochromes (cytochrome c6 and cytochrome f) at the step of heme attachment. This chain is Cytochrome c biogenesis protein CcsA, found in Nostoc sp. (strain PCC 7120 / SAG 25.82 / UTEX 2576).